The following is a 351-amino-acid chain: DNA polymerase IV (351 aa).

One can recognise a UmuC domain in the interval 4–185 (IIHVDMDCFF…LPLAKIPGVG (182 aa)). Mg(2+)-binding residues include aspartate 8 and aspartate 103. The active site involves glutamate 104.

The protein belongs to the DNA polymerase type-Y family. In terms of assembly, monomer. Requires Mg(2+) as cofactor.

Its subcellular location is the cytoplasm. It carries out the reaction DNA(n) + a 2'-deoxyribonucleoside 5'-triphosphate = DNA(n+1) + diphosphate. Poorly processive, error-prone DNA polymerase involved in untargeted mutagenesis. Copies undamaged DNA at stalled replication forks, which arise in vivo from mismatched or misaligned primer ends. These misaligned primers can be extended by PolIV. Exhibits no 3'-5' exonuclease (proofreading) activity. May be involved in translesional synthesis, in conjunction with the beta clamp from PolIII. The protein is DNA polymerase IV of Escherichia coli O139:H28 (strain E24377A / ETEC).